We begin with the raw amino-acid sequence, 293 residues long: Small ribosomal subunit biogenesis GTPase RsgA (293 aa).

The 161-residue stretch at 63–223 folds into the CP-type G domain; sequence KNELVRPPIA…VADTPGFSSL (161 aa). Residues 112-115 and 166-174 contribute to the GTP site; these read SKMD and GQSGVGKSS. 4 residues coordinate Zn(2+): C247, C252, H254, and C260.

This sequence belongs to the TRAFAC class YlqF/YawG GTPase family. RsgA subfamily. As to quaternary structure, monomer. Associates with 30S ribosomal subunit, binds 16S rRNA. Requires Zn(2+) as cofactor.

It is found in the cytoplasm. Functionally, one of several proteins that assist in the late maturation steps of the functional core of the 30S ribosomal subunit. Helps release RbfA from mature subunits. May play a role in the assembly of ribosomal proteins into the subunit. Circularly permuted GTPase that catalyzes slow GTP hydrolysis, GTPase activity is stimulated by the 30S ribosomal subunit. The polypeptide is Small ribosomal subunit biogenesis GTPase RsgA (Bacillus cereus (strain ATCC 14579 / DSM 31 / CCUG 7414 / JCM 2152 / NBRC 15305 / NCIMB 9373 / NCTC 2599 / NRRL B-3711)).